A 231-amino-acid chain; its full sequence is 5'-methylthioadenosine/S-adenosylhomocysteine nucleosidase (231 aa).

Catalysis depends on Glu12, which acts as the Proton acceptor. Residues Gly78, Val153, and 174–175 (ME) contribute to the substrate site. Catalysis depends on Asp198, which acts as the Proton donor.

This sequence belongs to the PNP/UDP phosphorylase family. MtnN subfamily.

It carries out the reaction S-adenosyl-L-homocysteine + H2O = S-(5-deoxy-D-ribos-5-yl)-L-homocysteine + adenine. The catalysed reaction is S-methyl-5'-thioadenosine + H2O = 5-(methylsulfanyl)-D-ribose + adenine. It catalyses the reaction 5'-deoxyadenosine + H2O = 5-deoxy-D-ribose + adenine. It participates in amino-acid biosynthesis; L-methionine biosynthesis via salvage pathway; S-methyl-5-thio-alpha-D-ribose 1-phosphate from S-methyl-5'-thioadenosine (hydrolase route): step 1/2. Its function is as follows. Catalyzes the irreversible cleavage of the glycosidic bond in both 5'-methylthioadenosine (MTA) and S-adenosylhomocysteine (SAH/AdoHcy) to adenine and the corresponding thioribose, 5'-methylthioribose and S-ribosylhomocysteine, respectively. Also cleaves 5'-deoxyadenosine, a toxic by-product of radical S-adenosylmethionine (SAM) enzymes, into 5-deoxyribose and adenine. The chain is 5'-methylthioadenosine/S-adenosylhomocysteine nucleosidase from Aliivibrio fischeri (Vibrio fischeri).